A 122-amino-acid polypeptide reads, in one-letter code: Large ribosomal subunit protein uL14 (122 aa).

The protein belongs to the universal ribosomal protein uL14 family. In terms of assembly, part of the 50S ribosomal subunit. Forms a cluster with proteins L3 and L19. In the 70S ribosome, L14 and L19 interact and together make contacts with the 16S rRNA in bridges B5 and B8.

In terms of biological role, binds to 23S rRNA. Forms part of two intersubunit bridges in the 70S ribosome. The chain is Large ribosomal subunit protein uL14 from Exiguobacterium sibiricum (strain DSM 17290 / CCUG 55495 / CIP 109462 / JCM 13490 / 255-15).